The following is a 43-amino-acid chain: Protein PsbN (43 aa).

A helical transmembrane segment spans residues 7-27 (IAIFISGLLVSFTGYALYTAF).

Belongs to the PsbN family.

Its subcellular location is the plastid. It is found in the chloroplast thylakoid membrane. In terms of biological role, may play a role in photosystem I and II biogenesis. The sequence is that of Protein PsbN from Suaeda maritima (Annual sea blite).